The primary structure comprises 361 residues: Histidinol-phosphate aminotransferase (361 aa).

Lys-219 is modified (N6-(pyridoxal phosphate)lysine).

The protein belongs to the class-II pyridoxal-phosphate-dependent aminotransferase family. Histidinol-phosphate aminotransferase subfamily. As to quaternary structure, homodimer. It depends on pyridoxal 5'-phosphate as a cofactor.

The enzyme catalyses L-histidinol phosphate + 2-oxoglutarate = 3-(imidazol-4-yl)-2-oxopropyl phosphate + L-glutamate. The protein operates within amino-acid biosynthesis; L-histidine biosynthesis; L-histidine from 5-phospho-alpha-D-ribose 1-diphosphate: step 7/9. This is Histidinol-phosphate aminotransferase from Acinetobacter baumannii (strain AB307-0294).